We begin with the raw amino-acid sequence, 174 residues long: Elongation factor Tu, mitochondrial (174 aa).

Residue D62–H66 coordinates GTP. At K78 the chain carries N6-succinyllysine. T103 bears the Phosphothreonine mark. The residue at position 121 (S121) is a Phosphoserine. Residue K161 is modified to N6-acetyllysine.

This sequence belongs to the GTP-binding elongation factor family. EF-Tu/EF-1A subfamily.

Its subcellular location is the mitochondrion. The catalysed reaction is GTP + H2O = GDP + phosphate + H(+). Its function is as follows. GTP hydrolase that promotes the GTP-dependent binding of aminoacyl-tRNA to the A-site of ribosomes during protein biosynthesis. This chain is Elongation factor Tu, mitochondrial, found in Mesocricetus auratus (Golden hamster).